A 181-amino-acid polypeptide reads, in one-letter code: MSILSLITAPDPILKKVASPVDTVNDSIRQLMDDMLETMYHNHGVGLAAPQVAVSKRIIVLDLSKVDIKEDNITNSEYKYPLFMVNPIVKAISNQTATAKEGCLSLPKQAIEVSRYHEIQVTYLDYYNKLTTLNAEGWLARAIQHEVDHLDGILLVDYLSNLKKEAALNTLSKIKDAAYDK.

Residues Cys103 and His145 each coordinate Fe cation. Glu146 is an active-site residue. His149 provides a ligand contact to Fe cation.

Belongs to the polypeptide deformylase family. Fe(2+) serves as cofactor.

The enzyme catalyses N-terminal N-formyl-L-methionyl-[peptide] + H2O = N-terminal L-methionyl-[peptide] + formate. Functionally, removes the formyl group from the N-terminal Met of newly synthesized proteins. Requires at least a dipeptide for an efficient rate of reaction. N-terminal L-methionine is a prerequisite for activity but the enzyme has broad specificity at other positions. This Orientia tsutsugamushi (strain Ikeda) (Rickettsia tsutsugamushi) protein is Peptide deformylase.